The following is a 299-amino-acid chain: Protoheme IX farnesyltransferase (299 aa).

Helical transmembrane passes span 27-47 (VVAL…HEHF), 53-73 (LIAL…NHLI), 97-117 (FNVL…LMLW), 121-141 (LTAY…TLYL), 149-169 (IVIA…SITG), 175-195 (AWLL…ALAI), 222-242 (ILLY…VGMA), 244-264 (YLYL…AIKL), and 273-293 (AIEM…ALLL).

Belongs to the UbiA prenyltransferase family. Protoheme IX farnesyltransferase subfamily.

It localises to the cell inner membrane. The enzyme catalyses heme b + (2E,6E)-farnesyl diphosphate + H2O = Fe(II)-heme o + diphosphate. It functions in the pathway porphyrin-containing compound metabolism; heme O biosynthesis; heme O from protoheme: step 1/1. Its function is as follows. Converts heme B (protoheme IX) to heme O by substitution of the vinyl group on carbon 2 of heme B porphyrin ring with a hydroxyethyl farnesyl side group. The polypeptide is Protoheme IX farnesyltransferase (Vibrio vulnificus (strain YJ016)).